The chain runs to 348 residues: Holliday junction branch migration complex subunit RuvB (348 aa).

Over residues 1 to 10 the composition is skewed to low complexity; the sequence is MAIVSSSSGR. The tract at residues 1 to 37 is disordered; the sequence is MAIVSSSSGRKPPRRPEALMDPQQAPEEVVSRPEDKL. The interval 13 to 198 is large ATPase domain (RuvB-L); that stretch reads PRRPEALMDP…FGLIQRLEFY (186 aa). The ATP site is built by L37, R38, G79, K82, T83, T84, R188, Y198, and R235. A Mg(2+)-binding site is contributed by T83. The small ATPAse domain (RuvB-S) stretch occupies residues 199–271; the sequence is GQGDLEAIVE…LVGEALSLHR (73 aa). A head domain (RuvB-H) region spans residues 274-348; it reads HRGLDASDRR…AARSHLAEAA (75 aa). Residues R329 and R334 each coordinate DNA.

This sequence belongs to the RuvB family. Homohexamer. Forms an RuvA(8)-RuvB(12)-Holliday junction (HJ) complex. HJ DNA is sandwiched between 2 RuvA tetramers; dsDNA enters through RuvA and exits via RuvB. An RuvB hexamer assembles on each DNA strand where it exits the tetramer. Each RuvB hexamer is contacted by two RuvA subunits (via domain III) on 2 adjacent RuvB subunits; this complex drives branch migration. In the full resolvosome a probable DNA-RuvA(4)-RuvB(12)-RuvC(2) complex forms which resolves the HJ.

It localises to the cytoplasm. The catalysed reaction is ATP + H2O = ADP + phosphate + H(+). In terms of biological role, the RuvA-RuvB-RuvC complex processes Holliday junction (HJ) DNA during genetic recombination and DNA repair, while the RuvA-RuvB complex plays an important role in the rescue of blocked DNA replication forks via replication fork reversal (RFR). RuvA specifically binds to HJ cruciform DNA, conferring on it an open structure. The RuvB hexamer acts as an ATP-dependent pump, pulling dsDNA into and through the RuvAB complex. RuvB forms 2 homohexamers on either side of HJ DNA bound by 1 or 2 RuvA tetramers; 4 subunits per hexamer contact DNA at a time. Coordinated motions by a converter formed by DNA-disengaged RuvB subunits stimulates ATP hydrolysis and nucleotide exchange. Immobilization of the converter enables RuvB to convert the ATP-contained energy into a lever motion, pulling 2 nucleotides of DNA out of the RuvA tetramer per ATP hydrolyzed, thus driving DNA branch migration. The RuvB motors rotate together with the DNA substrate, which together with the progressing nucleotide cycle form the mechanistic basis for DNA recombination by continuous HJ branch migration. Branch migration allows RuvC to scan DNA until it finds its consensus sequence, where it cleaves and resolves cruciform DNA. This chain is Holliday junction branch migration complex subunit RuvB, found in Synechococcus sp. (strain CC9605).